The following is a 538-amino-acid chain: Phosphoenolpyruvate carboxykinase (ATP) (538 aa).

The substrate site is built by arginine 61, tyrosine 195, and lysine 201. ATP contacts are provided by residues lysine 201, histidine 220, and 236 to 244; that span reads GLSGTGKTT. Mn(2+) is bound by residues lysine 201 and histidine 220. Aspartate 257 serves as a coordination point for Mn(2+). ATP is bound by residues glutamate 285, arginine 323, and threonine 449. Arginine 323 lines the substrate pocket.

This sequence belongs to the phosphoenolpyruvate carboxykinase (ATP) family. It depends on Mn(2+) as a cofactor.

Its subcellular location is the cytoplasm. It catalyses the reaction oxaloacetate + ATP = phosphoenolpyruvate + ADP + CO2. It functions in the pathway carbohydrate biosynthesis; gluconeogenesis. Its function is as follows. Involved in the gluconeogenesis. Catalyzes the conversion of oxaloacetate (OAA) to phosphoenolpyruvate (PEP) through direct phosphoryl transfer between the nucleoside triphosphate and OAA. The polypeptide is Phosphoenolpyruvate carboxykinase (ATP) (Bradyrhizobium diazoefficiens (strain JCM 10833 / BCRC 13528 / IAM 13628 / NBRC 14792 / USDA 110)).